Consider the following 434-residue polypeptide: Exopolygalacturonase X-1 (434 aa).

A signal peptide spans M1–G22. N-linked (GlcNAc...) asparagine glycosylation is found at N113, N129, and N199. A PbH1 1 repeat occupies S231–P252. Residue D245 is the Proton donor of the active site. C247 and C264 are oxidised to a cystine. Residues N253 and N265 are each glycosylated (N-linked (GlcNAc...) asparagine). The PbH1 2 repeat unit spans residues S254–S274. H268 is a catalytic residue. N292, N297, N329, N354, and N364 each carry an N-linked (GlcNAc...) asparagine glycan. One copy of the PbH1 3 repeat lies at V327–Q348. The stretch at P362–N405 is one PbH1 4 repeat. Cysteines 392 and 398 form a disulfide. N-linked (GlcNAc...) asparagine glycosylation is found at N423 and N430.

It belongs to the glycosyl hydrolase 28 family.

It is found in the secreted. It carries out the reaction [(1-&gt;4)-alpha-D-galacturonosyl](n) + H2O = alpha-D-galacturonate + [(1-&gt;4)-alpha-D-galacturonosyl](n-1). In terms of biological role, specific in hydrolyzing the terminal glycosidic bond of polygalacturonic acid and oligogalacturonates. The protein is Exopolygalacturonase X-1 (pgaX-1) of Emericella nidulans (strain FGSC A4 / ATCC 38163 / CBS 112.46 / NRRL 194 / M139) (Aspergillus nidulans).